The chain runs to 442 residues: tRNA-2-methylthio-N(6)-dimethylallyladenosine synthase (442 aa).

The region spanning 2–120 is the MTTase N-terminal domain; sequence KKVFIRTFGC…LPKMIVDKET (119 aa). [4Fe-4S] cluster is bound by residues cysteine 11, cysteine 49, cysteine 83, cysteine 157, cysteine 161, and cysteine 164. A Radical SAM core domain is found at 143–375; that stretch reads RVEGGAAFVS…NEVIEAETAR (233 aa). One can recognise a TRAM domain in the interval 378–441; it reads QTMIGTVQRC…TFSLRGKIVE (64 aa).

This sequence belongs to the methylthiotransferase family. MiaB subfamily. As to quaternary structure, monomer. [4Fe-4S] cluster serves as cofactor.

It localises to the cytoplasm. It catalyses the reaction N(6)-dimethylallyladenosine(37) in tRNA + (sulfur carrier)-SH + AH2 + 2 S-adenosyl-L-methionine = 2-methylsulfanyl-N(6)-dimethylallyladenosine(37) in tRNA + (sulfur carrier)-H + 5'-deoxyadenosine + L-methionine + A + S-adenosyl-L-homocysteine + 2 H(+). Catalyzes the methylthiolation of N6-(dimethylallyl)adenosine (i(6)A), leading to the formation of 2-methylthio-N6-(dimethylallyl)adenosine (ms(2)i(6)A) at position 37 in tRNAs that read codons beginning with uridine. The polypeptide is tRNA-2-methylthio-N(6)-dimethylallyladenosine synthase (Neisseria gonorrhoeae (strain NCCP11945)).